Consider the following 354-residue polypeptide: Replication-associated protein (354 aa).

Residues 11-114 (LHRNANTFLT…PLAVFERGTF (104 aa)) form the CRESS-DNA virus Rep endonuclease domain. The RCR-1 signature appears at 18-21 (FLTY). Positions 52, 60, and 62 each coordinate a divalent metal cation. Residues 60 to 62 (HLH) carry the RCR-2 motif. Tyrosine 100 acts as the For DNA cleavage activity in catalysis. The short motif at 100-103 (YILK) is the RCR-3 element. Glutamate 104 is an a divalent metal cation binding site. Residues 174–186 (SANKLFPDIQEEF) are oligomerization. 228 to 235 (GPTRTGKS) contributes to the ATP binding site. The transactivation stretch occupies residues 251-269 (VDWSSYNEDAIYNIVDDIP). The short motif at 291–302 (KYGKKKKVQMKS) is the Nuclear localization signal element.

Belongs to the geminiviridae Rep protein family. In terms of assembly, homooligomer. Rep binds to repeated DNA motifs (iterons). Forms the O-complex, which is a Rep-DNA complex involved in the initiation of RCR. Part of the C- and V-complexes which are RepA-Rep-DNA complexes involved in the c-sense and v-sense transcription. The cofactor is Mg(2+). It depends on Mn(2+) as a cofactor.

The protein localises to the host nucleus. Functionally, essential for the replication of viral ssDNA. The closed circular ssDNA genome is first converted to a superhelical dsDNA. Rep binds a specific region at the genome origin of replication. It introduces an endonucleolytic nick within the conserved sequence 5'-TAATATTAC-3' in the intergenic region of the genome present in all geminiviruses, thereby initiating the rolling circle replication (RCR). Following cleavage, binds covalently to the 5'-phosphate of DNA as a tyrosyl ester. The cleavage gives rise to a free 3'-OH that serves as a primer for the cellular DNA polymerase. The polymerase synthesizes the (+) strand DNA by rolling circle mechanism. After one round of replication, a Rep-catalyzed nucleotidyl transfer reaction releases a circular single-stranded virus genome, thereby terminating the replication. Displays origin-specific DNA cleavage, nucleotidyl transferase, ATPase and helicase activities. Acts as an inhibitor of C-sense gene transcription. In Avena sativa (Oat), this protein is Replication-associated protein.